The following is a 275-amino-acid chain: Large ribosomal subunit protein uL2 (275 aa).

Disordered stretches follow at residues 222 to 243 (GSVM…PIGR) and 256 to 275 (GGKT…KRKP).

It belongs to the universal ribosomal protein uL2 family. Part of the 50S ribosomal subunit. Forms a bridge to the 30S subunit in the 70S ribosome.

In terms of biological role, one of the primary rRNA binding proteins. Required for association of the 30S and 50S subunits to form the 70S ribosome, for tRNA binding and peptide bond formation. It has been suggested to have peptidyltransferase activity; this is somewhat controversial. Makes several contacts with the 16S rRNA in the 70S ribosome. The protein is Large ribosomal subunit protein uL2 of Syntrophomonas wolfei subsp. wolfei (strain DSM 2245B / Goettingen).